The sequence spans 88 residues: Mitochondrial import inner membrane translocase subunit Tim10 (88 aa).

The short motif at 29–54 (CHRKCVPPHYKEAELSKGEAVCLDRC) is the Twin CX3C motif element. Disulfide bonds link Cys-29–Cys-54 and Cys-33–Cys-50.

The protein belongs to the small Tim family. Heterohexamer; composed of 3 copies of TIMM9 and 3 copies of TIMM10/TIM10A, named soluble 70 kDa complex. The complex forms a 6-bladed alpha-propeller structure and associates with the TIMM22 component of the TIM22 complex. Interacts with multi-pass transmembrane proteins in transit.

Its subcellular location is the mitochondrion inner membrane. In terms of biological role, mitochondrial intermembrane chaperone that participates in the import and insertion of multi-pass transmembrane proteins into the mitochondrial inner membrane. May also be required for the transfer of beta-barrel precursors from the TOM complex to the sorting and assembly machinery (SAM complex) of the outer membrane. Acts as a chaperone-like protein that protects the hydrophobic precursors from aggregation and guide them through the mitochondrial intermembrane space. The chain is Mitochondrial import inner membrane translocase subunit Tim10 (timm10) from Danio rerio (Zebrafish).